The sequence spans 89 residues: Large ribosomal subunit protein bL27 (89 aa).

The interval 1–22 is disordered; sequence MAHTKKGGSSRNGRDSESKRLG.

This sequence belongs to the bacterial ribosomal protein bL27 family.

The protein is Large ribosomal subunit protein bL27 of Brucella melitensis biotype 1 (strain ATCC 23456 / CCUG 17765 / NCTC 10094 / 16M).